A 259-amino-acid chain; its full sequence is Large ribosomal subunit protein uL3c (259 aa).

The transit peptide at 1 to 37 (LKTTPLTLRSPFLHRLPLRALKTHKPTSLHISKSSIS) directs the protein to the chloroplast. Positions 176–211 (MTHGSKSHRQLGSIGAGTTPGRVYKGKKMPGRMGGT) are disordered. The span at 199–211 (YKGKKMPGRMGGT) shows a compositional bias: basic residues.

Belongs to the universal ribosomal protein uL3 family. In terms of assembly, part of the 50S ribosomal subunit.

It localises to the plastid. Its subcellular location is the chloroplast. Functionally, one of the primary rRNA binding proteins, it binds directly near the 3'-end of the 23S rRNA, where it nucleates assembly of the 50S subunit. This is Large ribosomal subunit protein uL3c (RPL3) from Nicotiana tabacum (Common tobacco).